We begin with the raw amino-acid sequence, 351 residues long: Sulfate/thiosulfate import ATP-binding protein CysA (351 aa).

In terms of domain architecture, ABC transporter spans 3 to 237 (ITVRNLHKRF…PRSAFVYEFL (235 aa)). 35-42 (GPSGCGKT) provides a ligand contact to ATP.

Belongs to the ABC transporter superfamily. Sulfate/tungstate importer (TC 3.A.1.6) family. In terms of assembly, the complex is composed of two ATP-binding proteins (CysA), two transmembrane proteins (CysT and CysW) and a solute-binding protein (CysP).

The protein resides in the cell inner membrane. The enzyme catalyses sulfate(out) + ATP + H2O = sulfate(in) + ADP + phosphate + H(+). The catalysed reaction is thiosulfate(out) + ATP + H2O = thiosulfate(in) + ADP + phosphate + H(+). In terms of biological role, part of the ABC transporter complex CysAWTP involved in sulfate/thiosulfate import. Responsible for energy coupling to the transport system. The sequence is that of Sulfate/thiosulfate import ATP-binding protein CysA from Burkholderia mallei (strain ATCC 23344).